We begin with the raw amino-acid sequence, 70 residues long: U2-agatoxin-Ao1q (70 aa).

The first 20 residues, 1–20 (MRSIISLLLISAMVFSMIAA), serve as a signal peptide directing secretion. Positions 21–34 (VPEEEGLQLSEDER) are excised as a propeptide. 2 disulfide bridges follow: C44-C58 and C52-C68. L69 carries the leucine amide modification.

Belongs to the neurotoxin 01 (U2-agtx) family. Post-translationally, does not contain a cysteine at position 53 which disrupts the cysteine framework. Expressed by the venom gland.

The protein localises to the secreted. In terms of biological role, insect active toxin causing rapid but reversible paralysis in crickets. No activity shown in mammals. Does not show effect on mammalian voltage-gated calcium channels. The sequence is that of U2-agatoxin-Ao1q from Agelena orientalis (Funnel-web spider).